The primary structure comprises 278 residues: Diaminopimelate epimerase (278 aa).

Residues Asn-13, Gln-49, and Asn-68 each coordinate substrate. The active-site Proton donor is Cys-77. Residues 78 to 79, Asn-161, Asn-194, and 212 to 213 each bind substrate; these read GN and ER. Residue Cys-221 is the Proton acceptor of the active site. 222–223 is a substrate binding site; the sequence is GT.

The protein belongs to the diaminopimelate epimerase family. Homodimer.

It localises to the cytoplasm. It catalyses the reaction (2S,6S)-2,6-diaminopimelate = meso-2,6-diaminopimelate. The protein operates within amino-acid biosynthesis; L-lysine biosynthesis via DAP pathway; DL-2,6-diaminopimelate from LL-2,6-diaminopimelate: step 1/1. Functionally, catalyzes the stereoinversion of LL-2,6-diaminopimelate (L,L-DAP) to meso-diaminopimelate (meso-DAP), a precursor of L-lysine and an essential component of the bacterial peptidoglycan. This Nitrosomonas eutropha (strain DSM 101675 / C91 / Nm57) protein is Diaminopimelate epimerase.